The following is a 353-amino-acid chain: MTAILERRESTSLWGRFCNWITSTENRLYIGWFGVLMIPTLLTATSVFIIAFIAAPPVDIDGIREPVSGSLLYGNNIISGAIIPTSAAIGLHFYPIWEAASVDEWLYNGGPYELIVLHFLLGVACYMGREWELSFRLGMRPWIAVAYSAPVAAATAVFLIYPIGQGSFSDGMPLGISGTFNFMIVFQAEHNILMHPFHMLGVAGVFGGSLFSAMHGSLVTSSLIRETTENESANAGYRFGQEEETYNIVAAHGYFGRLIFQYASFNNSRSLHFFLAAWPVVGIWFTALGISTMAFNLNGFNFNQSVVDSQGRVINTWADIINRANLGMEVMHERNAHNFPLDLAAVEVPSTNG.

At Thr2 the chain carries N-acetylthreonine. A Phosphothreonine modification is found at Thr2. Helical transmembrane passes span Tyr29–Ser46, His118–Leu133, and Trp142–Ala156. A chlorophyll a-binding site is contributed by His118. Tyr126 is a binding site for pheophytin a. Residues Asp170 and Glu189 each coordinate [CaMn4O5] cluster. The chain crosses the membrane as a helical span at residues Phe197–Leu218. His198 contributes to the chlorophyll a binding site. Residues His215 and Ser264–Phe265 each bind a quinone. Residue His215 coordinates Fe cation. Position 272 (His272) interacts with Fe cation. Residues Phe274–Leu288 form a helical membrane-spanning segment. Residues His332, Glu333, Asp342, and Ala344 each coordinate [CaMn4O5] cluster. The propeptide occupies Ala345–Gly353.

This sequence belongs to the reaction center PufL/M/PsbA/D family. PSII is composed of 1 copy each of membrane proteins PsbA, PsbB, PsbC, PsbD, PsbE, PsbF, PsbH, PsbI, PsbJ, PsbK, PsbL, PsbM, PsbT, PsbX, PsbY, PsbZ, Psb30/Ycf12, at least 3 peripheral proteins of the oxygen-evolving complex and a large number of cofactors. It forms dimeric complexes. The D1/D2 heterodimer binds P680, chlorophylls that are the primary electron donor of PSII, and subsequent electron acceptors. It shares a non-heme iron and each subunit binds pheophytin, quinone, additional chlorophylls, carotenoids and lipids. D1 provides most of the ligands for the Mn4-Ca-O5 cluster of the oxygen-evolving complex (OEC). There is also a Cl(-1) ion associated with D1 and D2, which is required for oxygen evolution. The PSII complex binds additional chlorophylls, carotenoids and specific lipids. serves as cofactor. Post-translationally, tyr-161 forms a radical intermediate that is referred to as redox-active TyrZ, YZ or Y-Z. In terms of processing, C-terminally processed by CTPA; processing is essential to allow assembly of the oxygen-evolving complex and thus photosynthetic growth.

It is found in the plastid. It localises to the chloroplast thylakoid membrane. The enzyme catalyses 2 a plastoquinone + 4 hnu + 2 H2O = 2 a plastoquinol + O2. Photosystem II (PSII) is a light-driven water:plastoquinone oxidoreductase that uses light energy to abstract electrons from H(2)O, generating O(2) and a proton gradient subsequently used for ATP formation. It consists of a core antenna complex that captures photons, and an electron transfer chain that converts photonic excitation into a charge separation. The D1/D2 (PsbA/PsbD) reaction center heterodimer binds P680, the primary electron donor of PSII as well as several subsequent electron acceptors. This Calycanthus floridus var. glaucus (Eastern sweetshrub) protein is Photosystem II protein D1.